The following is a 35-amino-acid chain: Coenzyme PQQ synthesis protein A (35 aa).

A cross-link (pyrroloquinoline quinone (Glu-Tyr)) is located at residues 16–20; that stretch reads EINMY.

This sequence belongs to the PqqA family.

The protein operates within cofactor biosynthesis; pyrroloquinoline quinone biosynthesis. Required for coenzyme pyrroloquinoline quinone (PQQ) biosynthesis. PQQ is probably formed by cross-linking a specific glutamate to a specific tyrosine residue and excising these residues from the peptide. This chain is Coenzyme PQQ synthesis protein A, found in Roseobacter denitrificans (strain ATCC 33942 / OCh 114) (Erythrobacter sp. (strain OCh 114)).